We begin with the raw amino-acid sequence, 404 residues long: Metacaspase-1 (404 aa).

The interval 1–97 (MHHHHQQPSY…NPQAFGHGAP (97 aa)) is disordered. Catalysis depends on residues His195 and Cys251.

It belongs to the peptidase C14B family.

Its function is as follows. Involved in cell death (apoptosis). The sequence is that of Metacaspase-1 (casA) from Emericella nidulans (strain FGSC A4 / ATCC 38163 / CBS 112.46 / NRRL 194 / M139) (Aspergillus nidulans).